A 458-amino-acid polypeptide reads, in one-letter code: Bifunctional protein GlmU (458 aa).

Residues 1–229 (MKEKALSIVI…FMEVEGVNNR (229 aa)) are pyrophosphorylase. Residues 11 to 14 (LAAG), Lys-25, Gln-76, 81 to 82 (GT), 103 to 105 (YGD), Gly-140, Glu-154, Asn-169, and Asn-227 contribute to the UDP-N-acetyl-alpha-D-glucosamine site. Residue Asp-105 participates in Mg(2+) binding. Residue Asn-227 coordinates Mg(2+). The interval 230 to 250 (QQLARLERYYQRKQADNLLLA) is linker. The segment at 251–458 (GVALADPERF…WQRPTKQTKK (208 aa)) is N-acetyltransferase. 2 residues coordinate UDP-N-acetyl-alpha-D-glucosamine: Arg-333 and Lys-351. His-363 (proton acceptor) is an active-site residue. 2 residues coordinate UDP-N-acetyl-alpha-D-glucosamine: Tyr-366 and Asn-377. Acetyl-CoA-binding positions include Ala-380, 386 to 387 (NY), Ser-405, Ala-423, and Arg-440.

In the N-terminal section; belongs to the N-acetylglucosamine-1-phosphate uridyltransferase family. It in the C-terminal section; belongs to the transferase hexapeptide repeat family. Homotrimer. Mg(2+) is required as a cofactor.

Its subcellular location is the cytoplasm. The catalysed reaction is alpha-D-glucosamine 1-phosphate + acetyl-CoA = N-acetyl-alpha-D-glucosamine 1-phosphate + CoA + H(+). It catalyses the reaction N-acetyl-alpha-D-glucosamine 1-phosphate + UTP + H(+) = UDP-N-acetyl-alpha-D-glucosamine + diphosphate. It participates in nucleotide-sugar biosynthesis; UDP-N-acetyl-alpha-D-glucosamine biosynthesis; N-acetyl-alpha-D-glucosamine 1-phosphate from alpha-D-glucosamine 6-phosphate (route II): step 2/2. The protein operates within nucleotide-sugar biosynthesis; UDP-N-acetyl-alpha-D-glucosamine biosynthesis; UDP-N-acetyl-alpha-D-glucosamine from N-acetyl-alpha-D-glucosamine 1-phosphate: step 1/1. It functions in the pathway bacterial outer membrane biogenesis; LPS lipid A biosynthesis. Catalyzes the last two sequential reactions in the de novo biosynthetic pathway for UDP-N-acetylglucosamine (UDP-GlcNAc). The C-terminal domain catalyzes the transfer of acetyl group from acetyl coenzyme A to glucosamine-1-phosphate (GlcN-1-P) to produce N-acetylglucosamine-1-phosphate (GlcNAc-1-P), which is converted into UDP-GlcNAc by the transfer of uridine 5-monophosphate (from uridine 5-triphosphate), a reaction catalyzed by the N-terminal domain. This is Bifunctional protein GlmU from Pasteurella multocida (strain Pm70).